The sequence spans 208 residues: Outer-membrane lipoprotein carrier protein (208 aa).

The signal sequence occupies residues 1–22 (MKKRLCAVLLASPLLFSAAVFA).

It belongs to the LolA family. In terms of assembly, monomer.

Its subcellular location is the periplasm. Functionally, participates in the translocation of lipoproteins from the inner membrane to the outer membrane. Only forms a complex with a lipoprotein if the residue after the N-terminal Cys is not an aspartate (The Asp acts as a targeting signal to indicate that the lipoprotein should stay in the inner membrane). This Shewanella baltica (strain OS195) protein is Outer-membrane lipoprotein carrier protein.